Reading from the N-terminus, the 516-residue chain is Endoglucanase 20 (516 aa).

The N-terminal stretch at 1–23 is a signal peptide; it reads MAAGMVATMVLLTCLAAGGLVVG. Asn83 is a glycosylation site (N-linked (GlcNAc...) asparagine). Asp93 (nucleophile) is an active-site residue. Catalysis depends on residues His416, Asp468, and Glu477.

It belongs to the glycosyl hydrolase 9 (cellulase E) family.

It localises to the secreted. The catalysed reaction is Endohydrolysis of (1-&gt;4)-beta-D-glucosidic linkages in cellulose, lichenin and cereal beta-D-glucans.. This Oryza sativa subsp. japonica (Rice) protein is Endoglucanase 20 (GLU15).